A 311-amino-acid polypeptide reads, in one-letter code: Halocin-S8 (311 aa).

2 consecutive propeptides follow at residues 1–230 and 267–311; these read MSDK…IQLQ and TVAC…TSFW.

Its subcellular location is the secreted. Functionally, has antibacterial activity against the haloarchaeons H.salinarium NRC817, Halobacterium GRB and H.gibbonsii. The polypeptide is Halocin-S8 (halS8) (Haloarchaeon S8a).